We begin with the raw amino-acid sequence, 237 residues long: Phosphoribosylaminoimidazole-succinocarboxamide synthase (237 aa).

It belongs to the SAICAR synthetase family.

It catalyses the reaction 5-amino-1-(5-phospho-D-ribosyl)imidazole-4-carboxylate + L-aspartate + ATP = (2S)-2-[5-amino-1-(5-phospho-beta-D-ribosyl)imidazole-4-carboxamido]succinate + ADP + phosphate + 2 H(+). Its pathway is purine metabolism; IMP biosynthesis via de novo pathway; 5-amino-1-(5-phospho-D-ribosyl)imidazole-4-carboxamide from 5-amino-1-(5-phospho-D-ribosyl)imidazole-4-carboxylate: step 1/2. This is Phosphoribosylaminoimidazole-succinocarboxamide synthase from Campylobacter fetus subsp. fetus (strain 82-40).